A 420-amino-acid chain; its full sequence is Cytochrome P-450 monooxygenase DoxA (420 aa).

C367 serves as a coordination point for heme.

The protein belongs to the cytochrome P450 family. As to quaternary structure, monomer. The cofactor is heme.

The protein resides in the cytoplasm. It catalyses the reaction 13-deoxydaunorubicin + NADPH + O2 + H(+) = 13-dihydrodaunorubicin + NADP(+) + H2O. The enzyme catalyses 13-dihydrodaunorubicin + NADPH + O2 + H(+) = daunorubicin + NADP(+) + 2 H2O. The catalysed reaction is 13-deoxycarminomycin + NADPH + O2 + H(+) = 13-dihydrocarminomycin + NADP(+) + H2O. It carries out the reaction 13-dihydrocarminomycin + NADPH + O2 + H(+) = carminomycin + NADP(+) + 2 H2O. It catalyses the reaction daunorubicin + NADPH + O2 + H(+) = doxorubicin + NADP(+) + H2O. Its pathway is antibiotic biosynthesis; daunorubicin biosynthesis. The protein operates within antibiotic biosynthesis; carminomycin biosynthesis. It functions in the pathway antibiotic biosynthesis; doxorubicin biosynthesis. Involved in the biosynthesis of the anthracyclines carminomycin, daunorubicin (daunomycin) and doxorubicin (adriamycin) which are aromatic polyketide antibiotics that exhibit high cytotoxicity and are widely applied in the chemotherapy of a variety of cancers. In vivo, DoxA catalyzes the C-13 hydroxylation of 13-deoxycarminomycin and 13-deoxydaunorubicin to yield 13-dihydrocarminomycin and 13-dihydrodaunorubicin, respectively, as well as the oxidation of these 13-dihydro-anthracyclines to their respective 13-keto forms, carminomycin and daunorubicin. In vivo, it also catalyzes the C-14 hydroxylation of daunorubicin to form doxorubicin. It can only use NADP. DoxA acts jointly with DnrV. This chain is Cytochrome P-450 monooxygenase DoxA (doxA), found in Streptomyces peucetius subsp. caesius.